Reading from the N-terminus, the 190-residue chain is Large ribosomal subunit protein uL5 (190 aa).

The protein belongs to the universal ribosomal protein uL5 family. Part of the 50S ribosomal subunit; part of the 5S rRNA/L5/L18/L25 subcomplex. Contacts the 5S rRNA and the P site tRNA. Forms a bridge to the 30S subunit in the 70S ribosome.

This is one of the proteins that bind and probably mediate the attachment of the 5S RNA into the large ribosomal subunit, where it forms part of the central protuberance. In the 70S ribosome it contacts protein S13 of the 30S subunit (bridge B1b), connecting the 2 subunits; this bridge is implicated in subunit movement. Contacts the P site tRNA; the 5S rRNA and some of its associated proteins might help stabilize positioning of ribosome-bound tRNAs. The protein is Large ribosomal subunit protein uL5 of Blochmanniella floridana.